The sequence spans 291 residues: ATP synthase gamma chain (291 aa).

It belongs to the ATPase gamma chain family. In terms of assembly, F-type ATPases have 2 components, CF(1) - the catalytic core - and CF(0) - the membrane proton channel. CF(1) has five subunits: alpha(3), beta(3), gamma(1), delta(1), epsilon(1). CF(0) has three main subunits: a, b and c.

It is found in the cell membrane. Produces ATP from ADP in the presence of a proton gradient across the membrane. The gamma chain is believed to be important in regulating ATPase activity and the flow of protons through the CF(0) complex. The protein is ATP synthase gamma chain of Buchnera aphidicola subsp. Schizaphis graminum (strain Sg).